We begin with the raw amino-acid sequence, 361 residues long: Probable dual-specificity RNA methyltransferase RlmN (361 aa).

The active-site Proton acceptor is E91. In terms of domain architecture, Radical SAM core spans Q97–D335. A disulfide bond links C104 and C340. 3 residues coordinate [4Fe-4S] cluster: C111, C115, and C118. Residues G163 to E164, S195, S218 to H220, and N296 contribute to the S-adenosyl-L-methionine site. Catalysis depends on C340, which acts as the S-methylcysteine intermediate.

It belongs to the radical SAM superfamily. RlmN family. [4Fe-4S] cluster serves as cofactor.

Its subcellular location is the cytoplasm. It catalyses the reaction adenosine(2503) in 23S rRNA + 2 reduced [2Fe-2S]-[ferredoxin] + 2 S-adenosyl-L-methionine = 2-methyladenosine(2503) in 23S rRNA + 5'-deoxyadenosine + L-methionine + 2 oxidized [2Fe-2S]-[ferredoxin] + S-adenosyl-L-homocysteine. It carries out the reaction adenosine(37) in tRNA + 2 reduced [2Fe-2S]-[ferredoxin] + 2 S-adenosyl-L-methionine = 2-methyladenosine(37) in tRNA + 5'-deoxyadenosine + L-methionine + 2 oxidized [2Fe-2S]-[ferredoxin] + S-adenosyl-L-homocysteine. In terms of biological role, specifically methylates position 2 of adenine 2503 in 23S rRNA and position 2 of adenine 37 in tRNAs. This chain is Probable dual-specificity RNA methyltransferase RlmN, found in Streptococcus mutans serotype c (strain ATCC 700610 / UA159).